Here is a 258-residue protein sequence, read N- to C-terminus: Trans-aconitate 2-methyltransferase (258 aa).

The protein belongs to the methyltransferase superfamily. Tam family.

It localises to the cytoplasm. The catalysed reaction is trans-aconitate + S-adenosyl-L-methionine = (E)-3-(methoxycarbonyl)pent-2-enedioate + S-adenosyl-L-homocysteine. Catalyzes the S-adenosylmethionine monomethyl esterification of trans-aconitate. The chain is Trans-aconitate 2-methyltransferase from Yersinia pseudotuberculosis serotype O:1b (strain IP 31758).